Here is a 424-residue protein sequence, read N- to C-terminus: SNF1-related protein kinase regulatory subunit gamma-1 (424 aa).

Residue Ala-2 is modified to N-acetylalanine. Position 44 is a phosphoserine (Ser-44). CBS domains follow at residues 63 to 131 (LSSD…EPPS), 185 to 244 (TFRW…CAGL), 263 to 324 (MSKD…YHDY), and 350 to 408 (IMSG…SGYF).

Belongs to the 5'-AMP-activated protein kinase gamma subunit family. As to quaternary structure, subunit of a probable heterotrimeric complex consisting of an alpha catalytic (KIN10 or KIN11) subunit, and a beta (KINB) and a gamma (KING or SNF4) non-catalytic regulatory subunits. Interacts with HXK1 in mitochondrion. Sumoylated by SIZ1. In terms of tissue distribution, expressed in vegetative organs and, to lower extent, in reproductive organs.

It localises to the mitochondrion. Functionally, regulatory subunit of the probable trimeric SNF1-related protein kinase (SnRK) complex, which may play a role in a signal transduction cascade regulating gene expression and carbohydrate metabolism in higher plants. The SnRK complex may also be involved in the regulation of fatty acid synthesis by phosphorylation of acetyl-CoA carboxylase and in assimilation of nitrogen by phosphorylating nitrate reductase. The sequence is that of SNF1-related protein kinase regulatory subunit gamma-1 (KING1) from Arabidopsis thaliana (Mouse-ear cress).